A 74-amino-acid polypeptide reads, in one-letter code: ERTHTGEKPFECSQCHKRFTRDHHLKTHMRLHTGEKPYHCTHCDRHFVQVANLRRHLRVHTGERPYACELCASR.

C2H2-type zinc fingers lie at residues 1 to 4, 10 to 32, 38 to 60, and 66 to 74; these read ERTH, FECS…MRLH, YHCT…LRVH, and YACELCASR.

It belongs to the krueppel C2H2-type zinc-finger protein family.

It localises to the nucleus. Functionally, krueppel is a gap class segmentation protein. This chain is Protein krueppel (Kr), found in Euscelis plebejus (Leafhopper).